We begin with the raw amino-acid sequence, 232 residues long: Vesicle transport through interaction with t-SNAREs homolog 1B (232 aa).

Ala-2 bears the N-acetylalanine mark. Interaction with CLINT1 stretches follow at residues 2 to 23 (AASAASSEHFEKLHEIFRGLLE) and 69 to 73 (APLTF). Topologically, residues 2–208 (AASAASSEHF…SRKVITNKLL (207 aa)) are cytoplasmic. Residues 36 to 98 (AGTEEKKKLV…AKLHREVRST (63 aa)) are a coiled coil. Arg-107 bears the Omega-N-methylarginine mark. Position 138 is a phosphoserine (Ser-138). Residues 160–201 (GTEIIEELGEQRDQLERTKSRLVNTNENLSKSRKILRSMSRK) are a coiled coil. Residues 209–229 (LSVIILLELAILVGLVYYKFF) form a helical; Anchor for type IV membrane protein membrane-spanning segment. Residues 230-232 (RHH) lie on the Vesicular side of the membrane.

The protein belongs to the VTI1 family. In terms of assembly, forms a SNARE complex with STX7, STX8 and VAMP8 which functions in the homotypic fusion of late endosomes. Component of the SNARE complex composed of STX7, STX8, VAMP7 and VIT1B that is required for heterotypic fusion of late endosomes with lysosomes. May interact with STX17. Interacts with CLINT1. Broadly expressed.

It is found in the early endosome membrane. Its subcellular location is the late endosome membrane. The protein resides in the lysosome membrane. It localises to the cytoplasmic granule. The protein localises to the recycling endosome membrane. Functionally, V-SNARE that mediates vesicle transport pathways through interactions with t-SNAREs on the target membrane. These interactions are proposed to mediate aspects of the specificity of vesicle trafficking and to promote fusion of the lipid bilayers. The protein is Vesicle transport through interaction with t-SNAREs homolog 1B (Vti1b) of Mus musculus (Mouse).